The chain runs to 75 residues: CLAVATA3/ESR (CLE)-related protein 2 (75 aa).

Positions 1 to 22 (MAKLSFTFCFLLFLLLSSIAAG) are cleaved as a signal peptide. Positions 40 to 75 (PSIEATSPTVEDDQAAGSHGKSPERLSPGGPDPQHH) are disordered. A hydroxyproline mark is found at P67 and P70. A glycan (O-linked (Ara...) hydroxyproline) is linked at P70.

This sequence belongs to the CLV3/ESR signal peptide family. Interacts with the extracellular leucine-rich repeat region of CLV1. The O-glycosylation (arabinosylation) of the hydroxyproline Pro-70 enhances binding affinity of the CLE2p peptide for its receptor. In terms of tissue distribution, mostly expressed in roots and seedlings, and, to a lower extent, in apex.

It is found in the secreted. The protein resides in the extracellular space. In terms of biological role, extracellular signal peptide that regulates cell fate. May act with CLV1 as a ligand-receptor pair in a signal transduction pathway, coordinating growth between adjacent meristematic regions. In Arabidopsis thaliana (Mouse-ear cress), this protein is CLAVATA3/ESR (CLE)-related protein 2.